A 265-amino-acid polypeptide reads, in one-letter code: Thioredoxin-related transmembrane protein 2 homolog (265 aa).

The N-terminal stretch at 1–32 (MLIPRLDEVRRALTAFHFFNTLLALAFPVIRS) is a signal peptide. Residues 33-96 (TSLCDYVFAV…KIAGMFLFIR (64 aa)) are Extracellular-facing. The helical transmembrane segment at 97-117 (ADILPGIIYILACLIVTVLFP) threads the bilayer. The Cytoplasmic segment spans residues 118 to 265 (EPVYNGPEQV…KKGAKAKKED (148 aa)). Positions 126-230 (QVTYFQGEQL…RPLVNDSRRA (105 aa)) constitute a Thioredoxin domain. A Di-lysine motif motif is present at residues 262-265 (KKED).

It is found in the membrane. The sequence is that of Thioredoxin-related transmembrane protein 2 homolog from Caenorhabditis elegans.